A 298-amino-acid polypeptide reads, in one-letter code: Probable mitochondrial 2-oxodicarboxylate carrier (298 aa).

6 consecutive transmembrane segments (helical) span residues 6 to 26 (IPFP…VLTL), 62 to 81 (HRLY…KRAL), 105 to 125 (ALSI…VVPF), 159 to 179 (ALYN…AGYF), 203 to 223 (LIAG…FDVI), and 267 to 287 (VLRL…VIEF). Solcar repeat units lie at residues 6–92 (IPFP…YSKL), 102–188 (SSPA…IRNS), and 197–287 (GEIR…VIEF).

It belongs to the mitochondrial carrier (TC 2.A.29) family.

It is found in the mitochondrion inner membrane. Transports C5-C7 oxodicarboxylates across the inner membranes of mitochondria. This Schizosaccharomyces pombe (strain 972 / ATCC 24843) (Fission yeast) protein is Probable mitochondrial 2-oxodicarboxylate carrier.